The sequence spans 289 residues: 18S rRNA (guanine-N(7))-methyltransferase RID2 (289 aa).

The interval 215 to 289 (KNEYDESCSE…FTSRKRRTRF (75 aa)) is disordered. A compositionally biased stretch (acidic residues) spans 219–237 (DESCSEDDNSDDEESEEVG). Over residues 243-254 (RPRKRQRTNTKV) the composition is skewed to basic residues. A compositionally biased stretch (basic and acidic residues) spans 255–264 (KGREWVLRKK). Positions 268 to 275 (RRKGKNVP) match the Nuclear localization signal motif.

It belongs to the class I-like SAM-binding methyltransferase superfamily. BUD23/WBSCR22 family. As to expression, expressed in seedlings, roots and flowers.

Its subcellular location is the nucleus. The protein resides in the nucleoplasm. It localises to the cytoplasm. It is found in the perinuclear region. The protein localises to the nucleolus. The enzyme catalyses guanosine(1575) in yeast 18S rRNA + S-adenosyl-L-methionine = N(7)-methylguanosine(1575) in yeast 18S rRNA + S-adenosyl-L-homocysteine. In terms of biological role, essential protein. S-adenosyl-L-methionine-dependent methyltransferase that specifically methylates the N(7) position of a guanine in 18S rRNA. Requires the methyltransferase adapter protein TRM112 for full rRNA methyltransferase activity. Important for biogenesis end export of the 40S ribosomal subunit independent on its methyltransferase activity. Involved in the pre-rRNA processing steps in the nucleolus leading to small-subunit rRNA production independently of its RNA-modifying catalytic activity. Supports cell proliferation. Required for the initiation of lateral root primordia formation and for the root apical meristem (RAM) organization as well as for leaves development. During callus formation from hypocotyl and root explants, required for the initial stage of reactivation of cell proliferation in the hypocotyl stele. Involved in leaf polarity establishment by functioning cooperatively with AS2 to repress abaxial genes ARF3, ARF4, KAN1, KAN2, YAB1 and YAB5, and the knox homeobox genes KNAT1, KNAT2, KNAT6, and STM to promote adaxial development in leaf primordia at shoot apical meristems at high temperatures. This chain is 18S rRNA (guanine-N(7))-methyltransferase RID2, found in Arabidopsis thaliana (Mouse-ear cress).